Reading from the N-terminus, the 321-residue chain is Reticulon-2 (321 aa).

Disordered regions lie at residues 1–36 and 65–85; these read MGHV…SPVT and PPVR…PREE. The 188-residue stretch at 134–321 folds into the Reticulon domain; sequence VKDLLYWRDI…TVKKPPAKQK (188 aa). 2 consecutive transmembrane segments (helical) span residues 163–183 and 250–270; these read FSVI…TLTL and FLVI…ITVL.

It localises to the endoplasmic reticulum membrane. Its subcellular location is the sarcoplasmic reticulum membrane. It is found in the cell membrane. The protein localises to the sarcolemma. The protein resides in the T-tubule. It localises to the cytoplasm. Its subcellular location is the myofibril. It is found in the sarcomere. The protein localises to the z line. The protein resides in the cytoskeleton. Inhibits amyloid precursor protein processing, probably by blocking BACE1 activity. Enhances trafficking of the glutamate transporter SLC1A1/EAAC1 from the endoplasmic reticulum to the cell surface. Plays a role in the translocation of SLC2A4/GLUT4 from intracellular membranes to the cell membrane which facilitates the uptake of glucose into the cell. This chain is Reticulon-2, found in Xenopus tropicalis (Western clawed frog).